The sequence spans 324 residues: D-alanine--D-alanine ligase (324 aa).

The ATP-grasp domain maps to 121–321; that stretch reads NQYLKAFGVR…IKDVMTDIIE (201 aa). Position 149–204 (149–204) interacts with ATP; the sequence is VEKIGLPCFIKPNLGGSSFGVTKVKTREQIQPAIAKAFSEAEEVMIEAFMGGTELT. Mg(2+) is bound by residues Asp-275, Glu-288, and Asn-290.

Belongs to the D-alanine--D-alanine ligase family. The cofactor is Mg(2+). It depends on Mn(2+) as a cofactor.

Its subcellular location is the cytoplasm. The catalysed reaction is 2 D-alanine + ATP = D-alanyl-D-alanine + ADP + phosphate + H(+). The protein operates within cell wall biogenesis; peptidoglycan biosynthesis. In terms of biological role, cell wall formation. This Bacteroides fragilis (strain ATCC 25285 / DSM 2151 / CCUG 4856 / JCM 11019 / LMG 10263 / NCTC 9343 / Onslow / VPI 2553 / EN-2) protein is D-alanine--D-alanine ligase.